The sequence spans 562 residues: Proton channel OTOP2 (562 aa).

The segment at 1 to 20 (MSEELAQGPKESPPAPRAGP) is disordered. The next 12 helical transmembrane spans lie at 30 to 50 (LLSV…ISGG), 62 to 82 (VFAL…FYLL), 100 to 120 (PIWL…MDVF), 137 to 157 (ILHP…LWVS), 169 to 189 (TWCG…AAVV), 241 to 261 (FYLY…LYVM), 289 to 309 (FFAG…VFII), 324 to 344 (ALVI…LVSL), 371 to 391 (LLMG…VAVV), 402 to 422 (LNLT…MFII), 495 to 515 (DISL…AFGA), and 527 to 547 (FYGY…GIFY).

Belongs to the otopetrin family.

Its subcellular location is the cell membrane. It catalyses the reaction H(+)(in) = H(+)(out). Its activity is regulated as follows. Actives at neutral and alkaline extracellular pH, acid extracellular pH appears to inhibit the channel. Insensitive to activation by Zn(2+). In terms of biological role, proton-selective ion channel open at neutral pH. Actives at neutral and alkaline extracellular pH, likely participates in some alkali-related physiological activities. The chain is Proton channel OTOP2 from Homo sapiens (Human).